The primary structure comprises 379 residues: MPYSNLHPSIPRPRSYRFKLAAFVLLVGSLMSLWMTGEPPSHTLHYLALHVASQQLGLLLKKLCCLAEELCHVQSRYQGSYWKAVRACVGSPICFMALILLSFYFYCSLENTSDLRLAWHLGILVLSKSLSMTLDLQSLAPAEVSAVCEEKNFNVAHGLAWSYYIGYLKLILPGLQARIRMFNQLHNNMLSGAGSRRLYILFPLDCGVPDDLSVADPNIRFRDMLPQQNTDRAGVKNRAYSNSVYELLENGQPAGACILEYATPLQTLFAMSQDGKAGFSREDRLEQAKLFCRTLEEILADVPESRNHCRLIVYQESEEGNSFSLSQEVLRHIRQEEKEEVTMSGPPTSVAPRPSLLSQEPRLLISGMEQPLPLRTDLI.

Residues 1-17 (MPYSNLHPSIPRPRSYR) are Cytoplasmic-facing. A mediates interaction with ZDHHC1 and ZDHHC11 region spans residues 1–190 (MPYSNLHPSI…MFNQLHNNML (190 aa)). Residues 18 to 34 (FKLAAFVLLVGSLMSLW) form a helical membrane-spanning segment. Over 35–44 (MTGEPPSHTL) the chain is Lumenal. A helical transmembrane segment spans residues 45 to 69 (HYLALHVASQQLGLLLKKLCCLAEE). The Cytoplasmic segment spans residues 70–91 (LCHVQSRYQGSYWKAVRACVGS). The S-palmitoyl cysteine moiety is linked to residue Cys-88. A helical transmembrane segment spans residues 92–106 (PICFMALILLSFYFY). At 107-116 (CSLENTSDLR) the chain is on the lumenal side. Residues 117-134 (LAWHLGILVLSKSLSMTL) form a helical membrane-spanning segment. Residues 135 to 379 (DLQSLAPAEV…QPLPLRTDLI (245 aa)) lie on the Cytoplasmic side of the membrane. A Glycyl lysine isopeptide (Lys-Gly) (interchain with G-Cter in ubiquitin) cross-link involves residue Lys-151. The tract at residues 153 to 340 (FNVAHGLAWS…RHIRQEEKEE (188 aa)) is cyclic dinucleotide-binding domain (CBD). A 2',3'-cGAMP-binding site is contributed by 162–167 (SYYIGY). Residue Gly-166 coordinates 3',3'-c-di-GMP. Residue Tyr-167 coordinates 2',3'-cUAMP. A Glycyl lysine isopeptide (Lys-Gly) (interchain with G-Cter in ubiquitin) cross-link involves residue Lys-236. Arg-238 serves as a coordination point for 2',3'-cUAMP. 2',3'-cGAMP contacts are provided by residues 238 to 241 (RAYS) and Thr-263. 3',3'-c-di-GMP contacts are provided by residues 238-241 (RAYS) and Thr-263. At Ser-241 the chain carries Phosphoserine. Residue Thr-263 coordinates 2',3'-cUAMP. A Glycyl lysine isopeptide (Lys-Gly) (interchain with G-Cter in SUMO) cross-link involves residue Lys-338. Residues 340–379 (EVTMSGPPTSVAPRPSLLSQEPRLLISGMEQPLPLRTDLI) form a C-terminal tail (CTT) region. Ser-355 bears the Phosphoserine mark. Phosphoserine; by TBK1 occurs at positions 358 and 366. The pLxIS motif motif lies at 363–366 (LLIS).

Belongs to the STING family. Homodimer; forms a homodimer in absence of cyclic nucleotide (c-di-GMP or cGAMP); 'Lys-63'-linked ubiquitination at Lys-151 is required for homodimerization. Homotetramer; in presence of cyclic nucleotide (c-di-GMP or cGAMP), forms tetramers and higher-order oligomers through side-by-side packing. Interacts (when phosphorylated) with IRF3; following activation and phosphorylation on the pLxIS motif by TBK1, recruits IRF3. Interacts with RIGI, MAVS and SSR2. Interacts with RNF5 and TRIM56. Interacts with TBK1; when homodimer, leading to subsequent production of IFN-beta. Interacts with IFIT1 and IFIT2. Interacts with TRIM29; this interaction induces STING1 ubiquitination and subsequent degradation. Associates with the MHC-II complex. Interacts with STEEP1; interaction takes place upon cGAMP-activation and STING1 phosphorylation by MAP3K7/TAK1 and promotes STING1 translocation to COPII vesicles. Interacts with SEC24A, SEC24B and SEC24C; promoting translocation to COPII vesicles. Interacts (when ubiquitinated) with SQSTM1; leading to relocalization to autophagosomes. Interacts with SURF4. Interacts with HNRNPA2B1. Interacts with ZDHHC1; ZDHHC1 constitutively interacts with STING1 and in presence of DNA viruses activates it by promoting its cGAMP-induced oligomerization and the recruitment of downstream signaling components. Interacts with ZDHHC11; in presence of DNA viruses promotes the recruitment of IRF3 to STING1. Interacts with TOMM70. Interacts with TAB1; promoting recruitment of TAB1 to the endoplasmic reticulum membrane and subsequent activation of MAP3K7/TAK1. Interacts (via transmembrane domain) with TMEM203. Interacts with DDX41. Phosphorylation by TBK1 leads to activation and production of IFN-beta. Following cyclic nucleotide (c-di-GMP or cGAMP)-binding, activation and translocation from the endoplasmic reticulum, STING1 is phosphorylated by TBK1 at Ser-366 in the pLxIS motif. The phosphorylated pLxIS motif constitutes an IRF3-binding motif, leading to recruitment of the transcription factor IRF3 to induce type-I interferons and other cytokines. Phosphorylated on tyrosine residues upon MHC-II aggregation. Dephosphorylation by PPP6C leads to inactivation and decreased production of IFN-beta. Phosphorylation at Ser-358 is also required to activate IRF3. Phosphorylation at Ser-355 by MAP3K7/TAK1 facilitates its interaction with STEEP1, promoting STING1 translocation to COPII vesicles. In terms of processing, ubiquitinated. Ubiquitinated via 'Lys-63'-linked ubiquitin chains in response to double-stranded DNA treatment, leading to relocalization to autophagosomes and subsequent degradation; this process is dependent on SQSTM1. 'Lys-63'-linked ubiquitination mediated by TRIM56 at Lys-151 promotes homodimerization and recruitment of the antiviral kinase TBK1 and subsequent production of IFN-beta. 'Lys-48'-linked polyubiquitination at Lys-151 occurring after viral infection is mediated by RNF5 and leads to proteasomal degradation. 'Lys-11'-linked polyubiquitination at Lys-151 by RNF26 leads to stabilize STING1: it protects STING1 from RNF5-mediated 'Lys-48'-linked polyubiquitination. 'Lys-33'-linked and 'Lys-48'-linked deubiquitinated by USP20; leading to its stabilization and promotion of innate antiviral response. 'Lys-48'-linked deubiquitinated by USP44; leading to its stabilization and promotion of innate antiviral response. Deubiquitinated by USP13; leading to inhibition of innate antiviral response. 'Lys-63'-linked deubiquitinated by USP49; leading to inhibition of the subsequent recruitment of TBK1 to the signaling complex. 'Lys-63'-linked ubiquitination mediated by RNF39 promotes the activation of the cGAS-STING pathway. Post-translationally, sumoylated at Lys-338 by TRIM38 during the early phase of viral infection, promoting its stability by preventing its relocalization to autophagosomes and subsequent degradation. Desumoylated by SENP2 during the late phase of viral infection. Palmitoylation takes place in the Golgi apparatus and creates a platform for the recruitment of TBK1.

It localises to the endoplasmic reticulum membrane. Its subcellular location is the cytoplasm. The protein resides in the perinuclear region. The protein localises to the endoplasmic reticulum-Golgi intermediate compartment membrane. It is found in the golgi apparatus membrane. It localises to the cytoplasmic vesicle. Its subcellular location is the autophagosome membrane. The protein resides in the mitochondrion outer membrane. The protein localises to the cell membrane. It catalyses the reaction H(+)(in) = H(+)(out). With respect to regulation, in contrast to mouse protein, not activated by anticancer molecule 5,6-dimethylxanthenone 4-acetic acid (DMXAA). Functionally, facilitator of innate immune signaling that acts as a sensor of cytosolic DNA from bacteria and viruses and promotes the production of type I interferon (IFN-alpha and IFN-beta). Innate immune response is triggered in response to non-CpG double-stranded DNA from viruses and bacteria delivered to the cytoplasm. Acts by binding cyclic dinucleotides: recognizes and binds cyclic di-GMP (c-di-GMP), a second messenger produced by bacteria, cyclic UMP-AMP (2',3'-cUAMP), and cyclic GMP-AMP (cGAMP), a messenger produced by CGAS in response to DNA virus in the cytosol. Upon binding to c-di-GMP, cUAMP or cGAMP, STING1 oligomerizes, translocates from the endoplasmic reticulum and is phosphorylated by TBK1 on the pLxIS motif, leading to recruitment and subsequent activation of the transcription factor IRF3 to induce expression of type I interferon and exert a potent anti-viral state. Exhibits 2',3' phosphodiester linkage-specific ligand recognition: can bind both 2'-3' linked cGAMP (2'-3'-cGAMP) and 3'-3' linked cGAMP but is preferentially activated by 2'-3' linked cGAMP. The preference for 2'-3'-cGAMP, compared to other linkage isomers is probably due to the ligand itself, whichs adopts an organized free-ligand conformation that resembles the STING1-bound conformation and pays low energy costs in changing into the active conformation. In addition to promote the production of type I interferons, plays a direct role in autophagy. Following cGAMP-binding, STING1 buds from the endoplasmic reticulum into COPII vesicles, which then form the endoplasmic reticulum-Golgi intermediate compartment (ERGIC). The ERGIC serves as the membrane source for WIPI2 recruitment and LC3 lipidation, leading to formation of autophagosomes that target cytosolic DNA or DNA viruses for degradation by the lysosome. Promotes autophagy by acting as a proton channel that directs proton efflux from the Golgi to facilitate MAP1LC3B/LC3B lipidation. The autophagy- and interferon-inducing activities can be uncoupled and autophagy induction is independent of TBK1 phosphorylation. Autophagy is also triggered upon infection by bacteria: following c-di-GMP-binding, which is produced by live Gram-positive bacteria, promotes reticulophagy. May be involved in translocon function, the translocon possibly being able to influence the induction of type I interferons. May be involved in transduction of apoptotic signals via its association with the major histocompatibility complex class II (MHC-II). The polypeptide is Stimulator of interferon genes protein (Rattus norvegicus (Rat)).